The primary structure comprises 355 residues: tRNA N6-adenosine threonylcarbamoyltransferase (355 aa).

Positions 113 and 117 each coordinate Fe cation. Residues 135–139 (LASGG), Asp168, Gly181, and Asn279 each bind substrate. Asp307 contributes to the Fe cation binding site.

Belongs to the KAE1 / TsaD family. Fe(2+) serves as cofactor.

The protein resides in the cytoplasm. It carries out the reaction L-threonylcarbamoyladenylate + adenosine(37) in tRNA = N(6)-L-threonylcarbamoyladenosine(37) in tRNA + AMP + H(+). Functionally, required for the formation of a threonylcarbamoyl group on adenosine at position 37 (t(6)A37) in tRNAs that read codons beginning with adenine. Is involved in the transfer of the threonylcarbamoyl moiety of threonylcarbamoyl-AMP (TC-AMP) to the N6 group of A37, together with TsaE and TsaB. TsaD likely plays a direct catalytic role in this reaction. In Bradyrhizobium sp. (strain BTAi1 / ATCC BAA-1182), this protein is tRNA N6-adenosine threonylcarbamoyltransferase.